The following is a 631-amino-acid chain: MVSKLSQLQTELLAALLESGLSKEALIQALGEPGPYLLAGEGPLDKGESCGGGRGELAELPNGLGETRGSEDETDDDGEDFTPPILKELENLSPEEAAHQKAVVETLLQEDPWRVAKMVKSYLQQHNIPQREVVDTTGLNQSHLSQHLNKGTPMKTQKRAALYTWYVRKQREVAQQFTHAGQGGLIEEPTGDELPTKKGRRNRFKWGPASQQILFQAYERQKNPSKEERETLVEECNRAECIQRGVSPSQAQGLGSNLVTEVRVYNWFANRRKEEAFRHKLAMDTYSGPPPGPGPGPALPAHSSPGLPPPALSPSKVHGVRYGQPATSETAEVPSSSGGPLVTVSTPLHQVSPTGLEPSHSLLSTEAKLVSAAGGPLPPVSTLTALHSLEQTSPGLNQQPQNLIMASLPGVMTIGPGEPASLGPTFTNTGASTLVIGLASTQAQSVPVINSMGSSLTTLQPVQFSQPLHPSYQQPLMPPVQSHVTQSPFMATMAQLQSPHALYSHKPEVAQYTHTGLLPQTMLITDTTNLSALASLTPTKQVFTSDTEASSESGLHTPASQATTLHVPSQDPASIQHLQPAHRLSASPTVSSSSLVLYQSSDSSNGQSHLLPSNHSVIETFISTQMASSSQ.

The segment at 1-31 is dimerization; that stretch reads MVSKLSQLQTELLAALLESGLSKEALIQALG. The 32-residue stretch at 1–32 folds into the HNF-p1 domain; that stretch reads MVSKLSQLQTELLAALLESGLSKEALIQALGE. Residues 40–81 form a disordered region; sequence GEGPLDKGESCGGGRGELAELPNGLGETRGSEDETDDDGEDF. Ser-70 is subject to Phosphoserine. Thr-74 is modified (phosphothreonine). The region spanning 87-182 is the POU-specific atypical domain; that stretch reads KELENLSPEE…VAQQFTHAGQ (96 aa). At Ser-93 the chain carries Phosphoserine. Residue Lys-117 forms a Glycyl lysine isopeptide (Lys-Gly) (interchain with G-Cter in ubiquitin) linkage. 4 interaction with DNA regions span residues 130–132, 143–149, 155–158, and 203–206; these read QRE, HLSQHLN, KTQK, and RFKW. Residues 183–205 are disordered; that stretch reads GGLIEEPTGDELPTKKGRRNRFK. Residues 197–205 carry the Nuclear localization signal motif; the sequence is KKGRRNRFK. Residues 199–279 constitute a DNA-binding region (homeobox; HNF1-type); it reads GRRNRFKWGP…NRRKEEAFRH (81 aa). At Ser-247 the chain carries Phosphoserine. Interaction with DNA regions lie at residues 263 to 265 and 270 to 273; these read RVY and NRRK. Disordered regions lie at residues 283 to 358 and 545 to 567; these read MDTY…GLEP and SDTEASSESGLHTPASQATTLHV. Over residues 288-298 the composition is skewed to pro residues; sequence GPPPGPGPGPA. Position 313 is a phosphoserine (Ser-313). The span at 325-353 shows a compositional bias: polar residues; the sequence is PATSETAEVPSSSGGPLVTVSTPLHQVSP.

This sequence belongs to the HNF1 homeobox family. As to quaternary structure, binds DNA as a dimer. Heterotetramer with PCBD1; formed by a dimer of dimers. Interacts with PCBD1. Interacts with BHLHE41. Interacts with NR5A2. Interacts with SPOP; this interaction promotes ubiquitination and degradation of HNF1A. Post-translationally, ubiquitinated in s SPOP-dependent manner; leading to prteasomal degradation. In terms of tissue distribution, liver.

The protein resides in the nucleus. Transcriptional activator that regulates the tissue specific expression of multiple genes, especially in pancreatic islet cells and in liver. Binds to the inverted palindrome 5'-GTTAATNATTAAC-3'. Activates the transcription of CYP1A2, CYP2E1 and CYP3A11. Its function is as follows. (Microbial infection) Plays a crucial role for hepatitis B virus gene transcription and DNA replication. Mechanistically, synergistically cooperates with NR5A2 to up-regulate the activity of one of the critical cis-elements in the hepatitis B virus genome enhancer II (ENII). This Homo sapiens (Human) protein is Hepatocyte nuclear factor 1-alpha (HNF1A).